We begin with the raw amino-acid sequence, 181 residues long: Monofunctional chorismate mutase (181 aa).

The first 20 residues, 1 to 20, serve as a signal peptide directing secretion; sequence MIRHIAIFLCSLLMCSTTFA. One can recognise a Chorismate mutase domain in the interval 21–102; it reads DSVTSVSLGA…ASKAIQYRYL (82 aa). Residues R38, K49, D58, E62, and Q98 each contribute to the substrate site.

It is found in the periplasm. It catalyses the reaction chorismate = prephenate. The protein operates within metabolic intermediate biosynthesis; prephenate biosynthesis; prephenate from chorismate: step 1/1. Functionally, catalyzes the Claisen rearrangement of chorismate to prephenate. The protein is Monofunctional chorismate mutase of Salmonella typhimurium.